The primary structure comprises 424 residues: Serine--tRNA ligase (424 aa).

An L-serine-binding site is contributed by 230 to 232 (TSE). ATP contacts are provided by residues 261–263 (RKE) and valine 277. Residue glutamate 284 coordinates L-serine. 348–351 (ELTS) contacts ATP. Residue threonine 382 coordinates L-serine.

Belongs to the class-II aminoacyl-tRNA synthetase family. Type-1 seryl-tRNA synthetase subfamily. As to quaternary structure, homodimer. The tRNA molecule binds across the dimer.

The protein resides in the cytoplasm. The enzyme catalyses tRNA(Ser) + L-serine + ATP = L-seryl-tRNA(Ser) + AMP + diphosphate + H(+). The catalysed reaction is tRNA(Sec) + L-serine + ATP = L-seryl-tRNA(Sec) + AMP + diphosphate + H(+). It functions in the pathway aminoacyl-tRNA biosynthesis; selenocysteinyl-tRNA(Sec) biosynthesis; L-seryl-tRNA(Sec) from L-serine and tRNA(Sec): step 1/1. Functionally, catalyzes the attachment of serine to tRNA(Ser). Is also able to aminoacylate tRNA(Sec) with serine, to form the misacylated tRNA L-seryl-tRNA(Sec), which will be further converted into selenocysteinyl-tRNA(Sec). In Nocardioides sp. (strain ATCC BAA-499 / JS614), this protein is Serine--tRNA ligase.